The sequence spans 252 residues: Aliphatic sulfonates import ATP-binding protein SsuB 1 (252 aa).

One can recognise an ABC transporter domain in the interval 6-234 (LQLHIAGKRF…PRDRQAHEAA (229 aa)). 38–45 (GASGCGKS) lines the ATP pocket.

The protein belongs to the ABC transporter superfamily. Aliphatic sulfonates importer (TC 3.A.1.17.2) family. In terms of assembly, the complex is composed of two ATP-binding proteins (SsuB), two transmembrane proteins (SsuC) and a solute-binding protein (SsuA).

It is found in the cell inner membrane. The catalysed reaction is ATP + H2O + aliphatic sulfonate-[sulfonate-binding protein]Side 1 = ADP + phosphate + aliphatic sulfonateSide 2 + [sulfonate-binding protein]Side 1.. Part of the ABC transporter complex SsuABC involved in aliphatic sulfonates import. Responsible for energy coupling to the transport system. This chain is Aliphatic sulfonates import ATP-binding protein SsuB 1, found in Xanthomonas axonopodis pv. citri (strain 306).